The primary structure comprises 328 residues: Cytochrome f (328 aa).

Positions 1–44 (MRNPDTLGLWTKTMVALRRFTVLAIATVSVFLITDLGLPQAASA) are cleaved as a signal peptide. The heme site is built by Y45, C66, C69, and H70. The helical transmembrane segment at 296 to 313 (FLVLFLAGIMLSQILLVL) threads the bilayer.

It belongs to the cytochrome f family. The 4 large subunits of the cytochrome b6-f complex are cytochrome b6, subunit IV (17 kDa polypeptide, PetD), cytochrome f and the Rieske protein, while the 4 small subunits are PetG, PetL, PetM and PetN. The complex functions as a dimer. It depends on heme as a cofactor.

Its subcellular location is the cellular thylakoid membrane. In terms of biological role, component of the cytochrome b6-f complex, which mediates electron transfer between photosystem II (PSII) and photosystem I (PSI), cyclic electron flow around PSI, and state transitions. This Synechocystis sp. (strain ATCC 27184 / PCC 6803 / Kazusa) protein is Cytochrome f (petA).